Reading from the N-terminus, the 357-residue chain is Glutamine synthetase cytosolic isozyme 1-2 (357 aa).

Residues 19–99 (IIAEYIWVGG…VMCDCYTPQG (81 aa)) enclose the GS beta-grasp domain. The region spanning 106–357 (KRHSAAKIFS…AETTLLWKQN (252 aa)) is the GS catalytic domain.

This sequence belongs to the glutamine synthetase family. As to quaternary structure, homooctamer. Expressed in roots and at lower levels in leaf blades and spikelets (rice flower).

The protein localises to the cytoplasm. The catalysed reaction is L-glutamate + NH4(+) + ATP = L-glutamine + ADP + phosphate + H(+). In terms of biological role, high-affinity glutamine synthetase involved in ammonium assimilation. Plays an important role in the primary assimilation of ammonium taken up by roots. Plays a role in maintaining nitrogen metabolic balance during ammonium assimilation, thus controlling plant growth and development. Reassimilates ammonium generated during lignification within developing tillers, which is probably required for the outgrowth of axillary buds. Required for nitrogen-dependent biosynthesis of cytokinin. Active cytokinin in axillary bud meristem is required for axillary bud outgrowth and necessary for tillering. This is Glutamine synthetase cytosolic isozyme 1-2 from Oryza sativa subsp. japonica (Rice).